The chain runs to 262 residues: Pimeloyl-[acyl-carrier protein] methyl ester esterase (262 aa).

In terms of domain architecture, AB hydrolase-1 spans 15–242; that stretch reads HLVLLHGWGL…AAHAPFISHP (228 aa). Substrate-binding positions include tryptophan 22, 82 to 83, and 143 to 147; these read SL and FLALQ. Residue serine 82 is the Nucleophile of the active site. Residues aspartate 207 and histidine 235 contribute to the active site. Residue histidine 235 participates in substrate binding.

It belongs to the AB hydrolase superfamily. Carboxylesterase BioH family. In terms of assembly, monomer.

The protein resides in the cytoplasm. The enzyme catalyses 6-carboxyhexanoyl-[ACP] methyl ester + H2O = 6-carboxyhexanoyl-[ACP] + methanol + H(+). The protein operates within cofactor biosynthesis; biotin biosynthesis. In terms of biological role, the physiological role of BioH is to remove the methyl group introduced by BioC when the pimeloyl moiety is complete. It allows to synthesize pimeloyl-ACP via the fatty acid synthetic pathway through the hydrolysis of the ester bonds of pimeloyl-ACP esters. In Shigella flexneri, this protein is Pimeloyl-[acyl-carrier protein] methyl ester esterase.